We begin with the raw amino-acid sequence, 197 residues long: Putative rho GDP-dissociation inhibitor 1 (197 aa).

Belongs to the Rho GDI family. Interacts with rac1A, rac1B, rac1C, racB, raCC and RacE.

The protein resides in the cytoplasm. Its function is as follows. Regulates the GDP/GTP exchange reaction of the Rho proteins by inhibiting the dissociation of GDP from them, and the subsequent binding of GTP to them. Regulates the Rac-dependent signaling pathways controlling cytokinesis, actin reorganization and the contractile vacuole. Required for efficient accumulation of cap at the cell cortex. The polypeptide is Putative rho GDP-dissociation inhibitor 1 (rdiA) (Dictyostelium discoideum (Social amoeba)).